A 103-amino-acid polypeptide reads, in one-letter code: Putative inactive recombination-promoting nuclease-like protein YjiP (103 aa).

This sequence belongs to the Rpn/YhgA-like nuclease family.

Functionally, this pseudogene is the N-terminal fragment of low activity DNA endonuclease RpnD which probably yields 3'-hydroxyl ends. The intact protein can be seen in this entry (AC B7NGZ6). Expression of the repaired protein increases the frequency of recA-independent recombination, but also decreases viability probably via DNA damage; in a RecA strain expression has no effect on viability but does induce the SOS repair response. May play a role in horizontal gene transfer. This is Putative inactive recombination-promoting nuclease-like protein YjiP (yjiP) from Escherichia coli (strain K12).